A 305-amino-acid chain; its full sequence is Protoheme IX farnesyltransferase (305 aa).

The next 9 membrane-spanning stretches (helical) occupy residues 28 to 48 (IIEL…QGVP), 52 to 72 (LVLL…ALNM), 101 to 121 (LAFG…TVNW), 122 to 142 (LSAW…TMIL), 149 to 169 (NIVW…SSVT), 174 to 194 (WAPV…YWPL), 218 to 238 (VVAR…LLLT), 240 to 260 (LGYT…FWLW), and 283 to 303 (LFHW…VDPF).

This sequence belongs to the UbiA prenyltransferase family. Protoheme IX farnesyltransferase subfamily.

Its subcellular location is the cell membrane. The catalysed reaction is heme b + (2E,6E)-farnesyl diphosphate + H2O = Fe(II)-heme o + diphosphate. It participates in porphyrin-containing compound metabolism; heme O biosynthesis; heme O from protoheme: step 1/1. Its function is as follows. Converts heme B (protoheme IX) to heme O by substitution of the vinyl group on carbon 2 of heme B porphyrin ring with a hydroxyethyl farnesyl side group. This Streptomyces avermitilis (strain ATCC 31267 / DSM 46492 / JCM 5070 / NBRC 14893 / NCIMB 12804 / NRRL 8165 / MA-4680) protein is Protoheme IX farnesyltransferase.